Reading from the N-terminus, the 446-residue chain is Glutamine synthetase (446 aa).

Residues 18–103 form the GS beta-grasp domain; sequence ENVRYLRLQF…LICDVYKTDG (86 aa). One can recognise a GS catalytic domain in the interval 110-446; sequence PRANLKRVLK…WERDQYMKQY (337 aa). Mg(2+) contacts are provided by Glu134 and Glu136. Glu186 serves as a coordination point for ATP. The Mg(2+) site is built by Glu191 and Glu198. L-glutamate is bound by residues 242 to 243 and Gly243; that span reads NG. A Mg(2+)-binding site is contributed by His247. Ser251 lines the ATP pocket. The L-glutamate site is built by Arg300, Glu306, and Arg318. 2 residues coordinate ATP: Arg318 and Arg323. Glu335 is a binding site for Mg(2+). Arg337 contacts L-glutamate.

Belongs to the glutamine synthetase family. Oligomer of 12 subunits arranged in the form of two hexagons. In its feedback-inhibited form, interacts with TnrA in order to block its DNA-binding activity. Requires Mg(2+) as cofactor.

The protein resides in the cytoplasm. It catalyses the reaction L-glutamate + NH4(+) + ATP = L-glutamine + ADP + phosphate + H(+). With respect to regulation, inhibited by glutamine. Its function is as follows. Glutamine synthetase (GS) is an unusual multitasking protein that functions as an enzyme, a transcription coregulator, and a chaperone in ammonium assimilation and in the regulation of genes involved in nitrogen metabolism. It catalyzes the ATP-dependent biosynthesis of glutamine from glutamate and ammonia. Feedback-inhibited GlnA also interacts with and regulates the activity of the transcriptional regulator TnrA. During nitrogen limitation, TnrA is in its DNA-binding active state and turns on the transcription of genes required for nitrogen assimilation. Under conditions of nitrogen excess, feedback-inhibited GlnA forms a stable complex with TnrA, which inhibits its DNA-binding activity. In contrast, feedback-inhibited GlnA acts as a chaperone to stabilize the DNA-binding activity of GlnR, which represses the transcription of nitrogen assimilation genes. This chain is Glutamine synthetase, found in Staphylococcus aureus (strain MSSA476).